The chain runs to 411 residues: Class E basic helix-loop-helix protein 40 (411 aa).

Residues 1-21 (MERIPSAQPPPTCLPKTPGLE) form a disordered region. An essential for interaction with BMAL1, E-box binding and repressor activity against the CLOCK-BMAL1 heterodimer region spans residues 1–139 (MERIPSAQPP…LSGKNIEAGQ (139 aa)). In terms of domain architecture, bHLH spans 52–107 (TYKLPHRLIEKKRRDRINECIAQLKDLLPEHLKLTTLGHLEKAVVLELTLKHVKAL). The interval 75 to 79 (LKDLL) is necessary for interaction with RXRA and repressor activity against RXRA. The region spanning 142-175 (FCSGFQTCAREVLQYLAKHENTRDLKSSQLVTHL) is the Orange domain. A Glycyl lysine isopeptide (Lys-Gly) (interchain with G-Cter in SUMO1, SUMO2 and SUMO3) cross-link involves residue K159. K167 is covalently cross-linked (Glycyl lysine isopeptide (Lys-Gly) (interchain with G-Cter in SUMO2)). Residues 186–293 (SASRKPLDSA…EPPTKKSRMQ (108 aa)) are disordered. Phosphoserine is present on S235. Positions 248-271 (ELEKGDLRSEQPYFKSDHGRRFTV) are enriched in basic and acidic residues. A Glycyl lysine isopeptide (Lys-Gly) (interchain with G-Cter in SUMO1); alternate cross-link involves residue K279. Residue K279 forms a Glycyl lysine isopeptide (Lys-Gly) (interchain with G-Cter in SUMO1, SUMO2 and SUMO3); alternate linkage. A Glycyl lysine isopeptide (Lys-Gly) (interchain with G-Cter in SUMO2); alternate cross-link involves residue K279. A Glycyl lysine isopeptide (Lys-Gly) (interchain with G-Cter in SUMO2) cross-link involves residue K288. Position 383 is a phosphoserine (S383).

Homodimer. Heterodimer with BHLHE41/DEC2. Interacts with TCF3/E47. Interacts with ubiquitin-conjugating enzyme UBE2I/UBC9. Interacts with HDAC1, SUMO1, RXRA and BMAL1. Ubiquitinated; which may lead to proteasomal degradation. In terms of processing, sumoylation inhibits its ubiquitination and promotes its negative regulation of the CLOCK-BMAL1 heterodimer transcriptional activator activity. As to expression, expressed in heart, spleen, lung, liver, muscle, kidney, uterus and gut. Highly expressed in the cerebral cortex, especially in the fifth layer, thalamus, superior colliculus, olfactory bulb, piriform cortex, hippocampus and hypothalamic nuclei.

Its subcellular location is the cytoplasm. The protein localises to the nucleus. Its function is as follows. Transcriptional repressor involved in the regulation of the circadian rhythm by negatively regulating the activity of the clock genes and clock-controlled genes. Acts as the negative limb of a novel autoregulatory feedback loop (DEC loop) which differs from the one formed by the PER and CRY transcriptional repressors (PER/CRY loop). Both these loops are interlocked as it represses the expression of PER1/2 and in turn is repressed by PER1/2 and CRY1/2. Represses the activity of the circadian transcriptional activator: CLOCK-BMAL1|BMAL2 heterodimer by competing for the binding to E-box elements (5'-CACGTG-3') found within the promoters of its target genes. Negatively regulates its own expression and the expression of DBP and BHLHE41/DEC2. Acts as a corepressor of RXR and the RXR-LXR heterodimers and represses the ligand-induced RXRA and NR1H3/LXRA transactivation activity. May be involved in the regulation of chondrocyte differentiation via the cAMP pathway. Represses the transcription of NR0B2 and attentuates the transactivation of NR0B2 by the CLOCK-BMAL1 complex. Drives the circadian rhythm of blood pressure through transcriptional repression of ATP1B1 in the cardiovascular system. The protein is Class E basic helix-loop-helix protein 40 (Bhlhe40) of Rattus norvegicus (Rat).